Consider the following 320-residue polypeptide: o-succinylbenzoate synthase (320 aa).

Lys133 functions as the Proton donor in the catalytic mechanism. Mg(2+) is bound by residues Asp161, Glu190, and Asp213. The active-site Proton acceptor is the Lys235.

It belongs to the mandelate racemase/muconate lactonizing enzyme family. MenC type 1 subfamily. A divalent metal cation serves as cofactor.

It catalyses the reaction (1R,6R)-6-hydroxy-2-succinyl-cyclohexa-2,4-diene-1-carboxylate = 2-succinylbenzoate + H2O. It functions in the pathway quinol/quinone metabolism; 1,4-dihydroxy-2-naphthoate biosynthesis; 1,4-dihydroxy-2-naphthoate from chorismate: step 4/7. The protein operates within quinol/quinone metabolism; menaquinone biosynthesis. Functionally, converts 2-succinyl-6-hydroxy-2,4-cyclohexadiene-1-carboxylate (SHCHC) to 2-succinylbenzoate (OSB). The polypeptide is o-succinylbenzoate synthase (Escherichia coli O81 (strain ED1a)).